We begin with the raw amino-acid sequence, 229 residues long: Cytidylate kinase (229 aa).

12–20 contributes to the ATP binding site; it reads GPSGSGKGT.

It belongs to the cytidylate kinase family. Type 1 subfamily.

It localises to the cytoplasm. It carries out the reaction CMP + ATP = CDP + ADP. The enzyme catalyses dCMP + ATP = dCDP + ADP. In Pseudomonas fluorescens (strain Pf0-1), this protein is Cytidylate kinase.